Here is a 259-residue protein sequence, read N- to C-terminus: Short-chain dehydrogenase reductase 5 (259 aa).

Residue 12–36 participates in NAD(+) binding; sequence IITGGASGIGAEAARLFTDHGAKVV. S144 is a binding site for substrate. Y157 functions as the Proton acceptor in the catalytic mechanism.

Belongs to the short-chain dehydrogenases/reductases (SDR) family.

This Arabidopsis thaliana (Mouse-ear cress) protein is Short-chain dehydrogenase reductase 5 (SDR5).